The primary structure comprises 600 residues: Glutamine--fructose-6-phosphate aminotransferase [isomerizing] (600 aa).

Cys-2 serves as the catalytic Nucleophile; for GATase activity. The 216-residue stretch at 2-217 (CGIVGYIGQL…DKEMVIVTDK (216 aa)) folds into the Glutamine amidotransferase type-2 domain. SIS domains are found at residues 283 to 422 (ISNA…SRGK) and 452 to 590 (IARE…VDKP). The active-site For Fru-6P isomerization activity is Lys-595.

Homodimer.

It is found in the cytoplasm. The catalysed reaction is D-fructose 6-phosphate + L-glutamine = D-glucosamine 6-phosphate + L-glutamate. Catalyzes the first step in hexosamine metabolism, converting fructose-6P into glucosamine-6P using glutamine as a nitrogen source. This Bacillus licheniformis (strain ATCC 14580 / DSM 13 / JCM 2505 / CCUG 7422 / NBRC 12200 / NCIMB 9375 / NCTC 10341 / NRRL NRS-1264 / Gibson 46) protein is Glutamine--fructose-6-phosphate aminotransferase [isomerizing].